We begin with the raw amino-acid sequence, 482 residues long: MANLFKQSRAKQKNKTTPSQTQTSTKGSARANAQVAGLRFKKSKQSKEHNTAQDANNNAITIQELDWMGQGVARGATMYFVEGALPGETCDIEVVSSKKKVVSAKTISIQGPSELRQPPFCPVFEACGGCQLQHIDADAALAYRDNALKIMMERQLSIGSGVWQAPLVGPRPQYRRKARLAIDARNPDNIKLGFREANSNKVVNLDTCPILVNPLSTAIGPLRNALEGYDSARHIGHISLIAGDNRAQVVIKHTKALEDALIETVDAFAKALGLDVVLENKQGRLRSVGEAQGLIMHTVDGCSISPSANDFIQINKVVNEKMINQALVWLDPRPNERIADWFSGLGNFTLPIAKKGALVQAIEGVAEMVLRAKDNAQQQGIENVEWLHLDLANKANVEASLQQGFDKVLLDPSREGALTVCHALVKALPKTIVYVSCNPSTFSRDAKVLINGGYEMEKAGVAEMFPFTHHMEMMALFTQRQQ.

The tract at residues 1-33 (MANLFKQSRAKQKNKTTPSQTQTSTKGSARANA) is disordered. Residues 15 to 28 (KTTPSQTQTSTKGS) are compositionally biased toward low complexity. The TRAM domain maps to 51–108 (TAQDANNNAITIQELDWMGQGVARGATMYFVEGALPGETCDIEVVSSKKKVVSAKTIS). Residues cysteine 121, cysteine 127, cysteine 130, and cysteine 208 each coordinate [4Fe-4S] cluster. Glutamine 313, phenylalanine 342, asparagine 347, glutamate 363, aspartate 390, and aspartate 411 together coordinate S-adenosyl-L-methionine. Catalysis depends on cysteine 437, which acts as the Nucleophile.

The protein belongs to the class I-like SAM-binding methyltransferase superfamily. RNA M5U methyltransferase family. RlmD subfamily.

The catalysed reaction is uridine(1939) in 23S rRNA + S-adenosyl-L-methionine = 5-methyluridine(1939) in 23S rRNA + S-adenosyl-L-homocysteine + H(+). Functionally, catalyzes the formation of 5-methyl-uridine at position 1939 (m5U1939) in 23S rRNA. The protein is 23S rRNA (uracil(1939)-C(5))-methyltransferase RlmD of Alteromonas mediterranea (strain DSM 17117 / CIP 110805 / LMG 28347 / Deep ecotype).